The primary structure comprises 486 residues: MVQLNQNFIDTITQELPAHLSMDEFIAACDRPLRRSIRVNTLKISSDDFKTLMQPKGWTFDPIPWCEDGFWISYDEEEQLGNALEHIQGLFYIQEASSMLPPTALFTPSAFTTSAKWQYVLDLASAPGSKTTQMAALMQNQGLLVANEYSASRVKVLHANVLRMGASHCALTHFDGRVFGEYLYESFDAVLIDAPCGGEGTVRKDADALKHWSLDDVLAISETQKALIESAFLALKPGGSLVYSTCTLNRLENQGVCEYLKQVYGDAVQFESLSDLFDGAERATTAEGFLHVWPQIYDSEGFFVAKLTKTASVPRLQPEPKLQKNFPFTTASAKQAQGIKDYFQQDLGISLPDELIMVRDDEFWLFPHEFNAFIGRMRFQRIGIKLADNSKHGFKVRHEAIIALAGKQLSPTAKTVDVSDVEAKEYLMGRDIPLATAGKAQGEVIVCYGGAPLGMAKHLGNKLKNNLPRDLVKDKVLLLPEQTKSL.

Residues 124–130 (ASAPGSK), glutamate 148, aspartate 175, and aspartate 193 each bind S-adenosyl-L-methionine. Residue cysteine 246 is the Nucleophile of the active site.

The protein belongs to the class I-like SAM-binding methyltransferase superfamily. RsmB/NOP family.

It is found in the cytoplasm. The catalysed reaction is cytidine(1407) in 16S rRNA + S-adenosyl-L-methionine = 5-methylcytidine(1407) in 16S rRNA + S-adenosyl-L-homocysteine + H(+). Functionally, specifically methylates the cytosine at position 1407 (m5C1407) of 16S rRNA. This chain is Ribosomal RNA small subunit methyltransferase F, found in Shewanella baltica (strain OS185).